A 124-amino-acid chain; its full sequence is Tax1-binding protein 3 (124 aa).

The residue at position 2 (S2) is an N-acetylserine. Residues 15–112 (RVEIHKLRQG…EVVRLLVTRQ (98 aa)) enclose the PDZ domain. S61 carries the phosphoserine modification.

In terms of assembly, interacts (via its PDZ domain) with GLS2. Interacts (via its PDZ domain) with RTKN (via the C-terminal region); this interaction facilitates Rho-mediated activation of the FOS serum response element (SRE). Interacts (via PDZ domain) with ARHGEF16. Interacts (via PDZ domain) with KCNJ4 (via C-terminus). Competes with LIN7A for KCNJ4 binding. Interacts (via its PDZ domain) with CTNNB1; this interaction inhibits the transcriptional activity of CTNNB1. Interacts with ADGRB2.

It localises to the cytoplasm. The protein localises to the nucleus. The protein resides in the cell membrane. May regulate a number of protein-protein interactions by competing for PDZ domain binding sites. Binds CTNNB1 and may thereby act as an inhibitor of the Wnt signaling pathway. Competes with LIN7A for KCNJ4 binding, and thereby promotes KCNJ4 internalization. May play a role in the Rho signaling pathway. The protein is Tax1-binding protein 3 of Mus musculus (Mouse).